The primary structure comprises 168 residues: ATP synthase F(1) complex subunit delta, mitochondrial (168 aa).

Residues 1 to 22 (MLPAALLRRPGLGRLVRHARAY) constitute a mitochondrion transit peptide. Residues Lys136 and Lys165 each carry the N6-acetyllysine; alternate modification. 2 positions are modified to N6-succinyllysine; alternate: Lys136 and Lys165.

It belongs to the ATPase epsilon chain family. As to quaternary structure, component of the ATP synthase complex composed at least of ATP5F1A/subunit alpha, ATP5F1B/subunit beta, ATP5MC1/subunit c (homooctomer), MT-ATP6/subunit a, MT-ATP8/subunit 8, ATP5ME/subunit e, ATP5MF/subunit f, ATP5MG/subunit g, ATP5MK/subunit k, ATP5MJ/subunit j, ATP5F1C/subunit gamma, ATP5F1D/subunit delta, ATP5F1E/subunit epsilon, ATP5PF/subunit F6, ATP5PB/subunit b, ATP5PD/subunit d, ATP5PO/subunit OSCP. ATP synthase complex consists of a soluble F(1) head domain (subunits alpha(3) and beta(3)) - the catalytic core - and a membrane F(0) domain - the membrane proton channel (subunits c, a, 8, e, f, g, k and j). These two domains are linked by a central stalk (subunits gamma, delta, and epsilon) rotating inside the F1 region and a stationary peripheral stalk (subunits F6, b, d, and OSCP). Component of a complex composed at least by ATPIF1, ATP5F1A, ATP5F1B, ATP5F1C AND ATP5F1E.

The protein resides in the mitochondrion. Its subcellular location is the mitochondrion inner membrane. In terms of biological role, subunit delta, of the mitochondrial membrane ATP synthase complex (F(1)F(0) ATP synthase or Complex V) that produces ATP from ADP in the presence of a proton gradient across the membrane which is generated by electron transport complexes of the respiratory chain. ATP synthase complex consist of a soluble F(1) head domain - the catalytic core - and a membrane F(1) domain - the membrane proton channel. These two domains are linked by a central stalk rotating inside the F(1) region and a stationary peripheral stalk. During catalysis, ATP synthesis in the catalytic domain of F(1) is coupled via a rotary mechanism of the central stalk subunits to proton translocation. In vivo, can only synthesize ATP although its ATP hydrolase activity can be activated artificially in vitro. With the central stalk subunit gamma, is essential for the biogenesis of F(1) catalytic part of the ATP synthase complex namely in the formation of F1 assembly intermediate. The chain is ATP synthase F(1) complex subunit delta, mitochondrial from Homo sapiens (Human).